The primary structure comprises 268 residues: Hydroxyethylthiazole kinase (268 aa).

Met45 contributes to the substrate binding site. Arg121 and Thr167 together coordinate ATP. A substrate-binding site is contributed by Gly194.

The protein belongs to the Thz kinase family. The cofactor is Mg(2+).

The catalysed reaction is 5-(2-hydroxyethyl)-4-methylthiazole + ATP = 4-methyl-5-(2-phosphooxyethyl)-thiazole + ADP + H(+). It participates in cofactor biosynthesis; thiamine diphosphate biosynthesis; 4-methyl-5-(2-phosphoethyl)-thiazole from 5-(2-hydroxyethyl)-4-methylthiazole: step 1/1. Functionally, catalyzes the phosphorylation of the hydroxyl group of 4-methyl-5-beta-hydroxyethylthiazole (THZ). In Bacillus anthracis (strain A0248), this protein is Hydroxyethylthiazole kinase.